The primary structure comprises 259 residues: Global transcriptional regulator CodY (259 aa).

The interval 1–155 (MALLQKTRII…GATVVGMEIL (155 aa)) is GAF domain. Residues 203–222 (ASKIADRVGITRSVIVNALR) constitute a DNA-binding region (H-T-H motif). The residue at position 215 (Ser-215) is a Phosphoserine.

This sequence belongs to the CodY family.

It localises to the cytoplasm. DNA-binding global transcriptional regulator which is involved in the adaptive response to starvation and acts by directly or indirectly controlling the expression of numerous genes in response to nutrient availability. During rapid exponential growth, CodY is highly active and represses genes whose products allow adaptation to nutrient depletion. In Bacillus pumilus (strain SAFR-032), this protein is Global transcriptional regulator CodY.